The following is a 2054-amino-acid chain: Multiple PDZ domain protein (2054 aa).

The 61-residue stretch at 3 to 63 (ETIDKNRALQ…SLQQLKDQVN (61 aa)) folds into the L27 domain. Residues 138 to 225 (IFELLKPPCG…TIQLVIARGS (88 aa)) form the PDZ 1 domain. Serine 231 is subject to Phosphoserine. PDZ domains lie at 258–338 (TIEL…ARGA), 377–463 (DVEL…MRKG), 545–626 (VAHV…CRRT), and 692–778 (AIEL…VAKP). 2 positions are modified to phosphoserine: serine 782 and serine 1065. In terms of domain architecture, PDZ 6 spans 995–1076 (TVTIAKGSSS…IGPDIKITYV (82 aa)). Residues 1110 to 1129 (PELPEREEGEGEESELQNAA) are disordered. The PDZ 7 domain occupies 1138–1230 (RVELWREPSK…PVVFMVQSIV (93 aa)). Arginine 1157 carries the post-translational modification Omega-N-methylarginine. Positions 1261–1273 (LQLTSDKAPSQSE) are enriched in polar residues. The tract at residues 1261-1312 (LQLTSDKAPSQSESESEKATLCSVPSSSPSVFSEMSSDYAQPSATTVAEDED) is disordered. Low complexity predominate over residues 1283–1297 (SVPSSSPSVFSEMSS). The 84-residue stretch at 1337–1420 (MIELEKGHSG…KVKIIFIRNA (84 aa)) folds into the PDZ 8 domain. The segment at 1433–1454 (AADPLPSTSESPQNKEVEPSIT) is disordered. The region spanning 1470–1551 (HLELPKDQGG…TVKLTVGAEN (82 aa)) is the PDZ 9 domain. The interval 1560–1594 (AAVTASGERKDSSQTPAVPAPDLEPIPSTSRSSTP) is disordered. 2 PDZ domains span residues 1613–1696 (TIEI…YRDE) and 1709–1791 (TVEL…GRIK). Positions 1795-1834 (FHSERRPSQSSQVSESSLSSFSLPRSGIHTSESSESSAKK) are disordered. Phosphoserine is present on residues serine 1802 and serine 1808. The span at 1802–1834 (SQSSQVSESSLSSFSLPRSGIHTSESSESSAKK) shows a compositional bias: low complexity. 2 PDZ domains span residues 1846–1932 (TVEI…VAGG) and 1971–2054 (TITL…MVLS).

Interacts with F11R/JAM, CLDN1, NG2, CXADR, CRB1, MPP4 and PALS1, HTR2A, HTR2B, PLEKHA1/TAPP1 and PLEKHA2/TAPP2. Interacts with CXADR. Interacts with HTR2C, CLDN5, DLG4, GRIN1, SYNGAP1, CAMK2A and CAMK2B. Interacts with FAT4 (via cytoplasmic domain). Interacts with DLL1. As to expression, abundant in all cerebral cortical layers, especially the piriform cortex, the pyramidal cells of the CA1-CA3 subfields of the hippocampus, as well as the granular layer of the dentate gyrus. Detected in the internal granular layer and the mitral cell layer of the olfactory bulb; in the medial habenular nucleus; and in amygdaloid, thalamic, hypothalamic, and pontine nuclei. In the cerebellum, found at high levels in the granular layer. Detected in the lateral ventricle. Expression overlaps with 5-HT2C receptor expression in all regions of the brain including the choroid plexus, where 5-HT2C receptors are highly enriched.

It localises to the endomembrane system. The protein resides in the cell junction. Its subcellular location is the tight junction. It is found in the synapse. The protein localises to the apical cell membrane. It localises to the postsynaptic density. The protein resides in the cell projection. Its subcellular location is the dendrite. It is found in the synaptosome. In terms of biological role, member of the NMDAR signaling complex that may play a role in control of AMPAR potentiation and synaptic plasticity in excitatory synapses. Promotes clustering of HT2RC at the cell surface. The protein is Multiple PDZ domain protein (Mpdz) of Rattus norvegicus (Rat).